A 255-amino-acid polypeptide reads, in one-letter code: Aliphatic sulfonates import ATP-binding protein SsuB (255 aa).

The 222-residue stretch at 12–233 (LLLNAVSKHY…RLGSVRLAEL (222 aa)) folds into the ABC transporter domain. Residue 44-51 (GRSGGGKS) coordinates ATP.

This sequence belongs to the ABC transporter superfamily. Aliphatic sulfonates importer (TC 3.A.1.17.2) family. In terms of assembly, the complex is composed of two ATP-binding proteins (SsuB), two transmembrane proteins (SsuC) and a solute-binding protein (SsuA).

It localises to the cell inner membrane. The enzyme catalyses ATP + H2O + aliphatic sulfonate-[sulfonate-binding protein]Side 1 = ADP + phosphate + aliphatic sulfonateSide 2 + [sulfonate-binding protein]Side 1.. Its function is as follows. Part of the ABC transporter complex SsuABC involved in aliphatic sulfonates import. Responsible for energy coupling to the transport system. This Shigella flexneri serotype 5b (strain 8401) protein is Aliphatic sulfonates import ATP-binding protein SsuB.